Reading from the N-terminus, the 347-residue chain is Spermidine/putrescine import ATP-binding protein PotA (347 aa).

The ABC transporter domain occupies 6–236 (IEIKNVYKEF…PKNAFVAKFI (231 aa)). 38–45 (GPSGCGKT) provides a ligand contact to ATP.

Belongs to the ABC transporter superfamily. Spermidine/putrescine importer (TC 3.A.1.11.1) family. In terms of assembly, the complex is composed of two ATP-binding proteins (PotA), two transmembrane proteins (PotB and PotC) and a solute-binding protein (PotD).

Its subcellular location is the cell membrane. It carries out the reaction ATP + H2O + polyamine-[polyamine-binding protein]Side 1 = ADP + phosphate + polyamineSide 2 + [polyamine-binding protein]Side 1.. Functionally, part of the ABC transporter complex PotABCD involved in spermidine/putrescine import. Responsible for energy coupling to the transport system. In Clostridium novyi (strain NT), this protein is Spermidine/putrescine import ATP-binding protein PotA.